We begin with the raw amino-acid sequence, 444 residues long: Acyl-CoA 6-desaturase (444 aa).

Topologically, residues 1-131 are cytoplasmic; it reads MGKGGNQGEG…DMNLFKTNHV (131 aa). The region spanning 18–95 is the Cytochrome b5 heme-binding domain; that stretch reads VPTFSWEEIQ…LKPLLIGELA (78 aa). The chain crosses the membrane as a helical span at residues 132–152; the sequence is FFLLLLAHIIALESIAWFTVF. The Lumenal segment spans residues 153–157; sequence YFGNG. Residues 158-178 form a helical membrane-spanning segment; sequence WIPTLITAFVLATSQAQAGWL. Over 179–264 the chain is Cytoplasmic; it reads QHDYGHLSVY…KYLPYNHQHE (86 aa). Positions 180–184 match the Histidine box-1 motif; it reads HDYGH. A Histidine box-2 motif is present at residues 217–221; sequence HFQHH. Residues 265 to 285 form a helical membrane-spanning segment; the sequence is YFFLIGPPLLIPMYFQYQIIM. Topologically, residues 286–305 are lumenal; it reads TMIVHKNWVDLAWAVSYYIR. The chain crosses the membrane as a helical span at residues 306–326; sequence FFITYIPFYGILGALLFLNFI. The Cytoplasmic portion of the chain corresponds to 327-444; it reads RFLESHWFVW…KLWLDAYLHK (118 aa). Positions 382–386 match the Histidine box-3 motif; sequence QIEHH.

The protein belongs to the fatty acid desaturase type 1 family. In terms of tissue distribution, expressed in a wide array of tissues, highest expression is found in liver followed by brain, lung, heart, and retina. A lower level is found in breast tumor when compared with normal tissues; lowest levels were found in patients with poor prognostic index.

The protein resides in the endoplasmic reticulum membrane. It catalyses the reaction (9Z,12Z)-octadecadienoyl-CoA + 2 Fe(II)-[cytochrome b5] + O2 + 2 H(+) = (6Z,9Z,12Z)-octadecatrienoyl-CoA + 2 Fe(III)-[cytochrome b5] + 2 H2O. The catalysed reaction is (9Z,12Z,15Z)-octadecatrienoyl-CoA + 2 Fe(II)-[cytochrome b5] + O2 + 2 H(+) = (6Z,9Z,12Z,15Z)-octadecatetraenoyl-CoA + 2 Fe(III)-[cytochrome b5] + 2 H2O. The enzyme catalyses hexadecanoyl-CoA + 2 Fe(II)-[cytochrome b5] + O2 + 2 H(+) = (6Z)-hexadecenoyl-CoA + 2 Fe(III)-[cytochrome b5] + 2 H2O. It carries out the reaction (9Z,12Z,15Z,18Z,21Z)-tetracosapentaenoyl-CoA + 2 Fe(II)-[cytochrome b5] + O2 + 2 H(+) = (6Z,9Z,12Z,15Z,18Z,21Z)-tetracosahexaenoyl-CoA + 2 Fe(III)-[cytochrome b5] + 2 H2O. It catalyses the reaction (11E)-octadecenoyl-CoA + 2 Fe(II)-[cytochrome b5] + O2 + 2 H(+) = (6Z,11E)-octadecadienoyl-CoA + 2 Fe(III)-[cytochrome b5] + 2 H2O. The catalysed reaction is (11Z,14Z)-eicosadienoyl-CoA + 2 Fe(II)-[cytochrome b5] + O2 + 2 H(+) = (8Z,11Z,14Z)-eicosatrienoyl-CoA + 2 Fe(III)-[cytochrome b5] + 2 H2O. The enzyme catalyses (11Z,14Z,17Z)-eicosatrienoyl-CoA + 2 Fe(II)-[cytochrome b5] + O2 + 2 H(+) = (8Z,11Z,14Z,17Z)-eicosatetraenoyl-CoA + 2 Fe(III)-[cytochrome b5] + 2 H2O. Its pathway is lipid metabolism; polyunsaturated fatty acid biosynthesis. Functionally, involved in the biosynthesis of highly unsaturated fatty acids (HUFA) from the essential polyunsaturated fatty acids (PUFA) linoleic acid (LA) (18:2n-6) and alpha-linolenic acid (ALA) (18:3n-3) precursors, acting as a fatty acyl-coenzyme A (CoA) desaturase that introduces a cis double bond at carbon 6 of the fatty acyl chain. Catalyzes the first and rate limiting step in this pathway which is the desaturation of LA (18:2n-6) and ALA (18:3n-3) into gamma-linoleate (GLA) (18:3n-6) and stearidonate (18:4n-3), respectively. Subsequently, in the biosynthetic pathway of HUFA n-3 series, it desaturates tetracosapentaenoate (24:5n-3) to tetracosahexaenoate (24:6n-3), which is then converted to docosahexaenoate (DHA)(22:6n-3), an important lipid for nervous system function. Desaturates hexadecanate (palmitate) to produce 6Z-hexadecenoate (sapienate), a fatty acid unique to humans and major component of human sebum, that has been implicated in the development of acne and may have potent antibacterial activity. It can also desaturate (11E)-octadecenoate (trans-vaccenoate, the predominant trans fatty acid in human milk) at carbon 6 generating (6Z,11E)-octadecadienoate. In addition to Delta-6 activity, this enzyme exhibits Delta-8 activity with slight biases toward n-3 fatty acyl-CoA substrates. The protein is Acyl-CoA 6-desaturase of Homo sapiens (Human).